The following is a 292-amino-acid chain: Protease HtpX (292 aa).

2 helical membrane passes run 5–25 (IFLFLLTNLAVLMLAGIVMSL) and 34–54 (SGLLVMAAIFGFGGSFISLLL). Zn(2+) is bound at residue His140. Glu141 is an active-site residue. His144 is a binding site for Zn(2+). Helical transmembrane passes span 155–175 (LLQGVLNTFVIVLARVVGGII) and 193–213 (IIVFALEMVFGLFATMIAMWF). Glu218 lines the Zn(2+) pocket.

It belongs to the peptidase M48B family. Zn(2+) serves as cofactor.

The protein resides in the cell inner membrane. The sequence is that of Protease HtpX from Xanthomonas euvesicatoria pv. vesicatoria (strain 85-10) (Xanthomonas campestris pv. vesicatoria).